A 566-amino-acid polypeptide reads, in one-letter code: Rho GTPase-activating protein gacH (566 aa).

Disordered regions lie at residues 1-56, 65-84, 128-168, and 322-366; these read MSGV…SGAT, LLKQ…NNNK, SEDE…SAHS, and KPQV…NSKN. The segment covering 14–35 has biased composition (low complexity); sequence SSTTATTTGSSKSSLNISKSVS. The span at 36-56 shows a compositional bias: polar residues; sequence PTGNKAVSPMSSPNSLQSGAT. Over residues 65–83 the composition is skewed to low complexity; sequence LLKQQQQPNHSITTNNNNN. Over residues 130 to 141 the composition is skewed to acidic residues; sequence DEYEDDEDEDEN. Positions 142–160 are enriched in low complexity; that stretch reads NNSVNNNSNNNSNNNNNNN. A compositionally biased stretch (polar residues) spans 327–337; that stretch reads KSPQSSGSLST. A compositionally biased stretch (low complexity) spans 345 to 356; it reads SSSLQRSRSVSQ. A Rho-GAP domain is found at 369–564; it reads GSLDTILEKE…LLIENYNLFY (196 aa).

It localises to the cytoplasm. In terms of biological role, rho GTPase-activating protein involved in the signal transduction pathway. The polypeptide is Rho GTPase-activating protein gacH (gacH) (Dictyostelium discoideum (Social amoeba)).